The following is a 410-amino-acid chain: Dihydrolipoyllysine-residue succinyltransferase component of 2-oxoglutarate dehydrogenase complex (410 aa).

The Lipoyl-binding domain occupies 3–81 (IINIFIPDLP…QVIGTLLKIG (79 aa)). N6-lipoyllysine is present on Lys-44. One can recognise a Peripheral subunit-binding (PSBD) domain in the interval 112 to 150 (TYSPTVRRLISMHDLRDVDIIQGTGTKNRLTRKDILNYL). Residues His-381 and Asp-385 contribute to the active site.

Belongs to the 2-oxoacid dehydrogenase family. In terms of assembly, forms a 24-polypeptide structural core with octahedral symmetry. Part of the 2-oxoglutarate dehydrogenase (OGDH) complex composed of E1 (2-oxoglutarate dehydrogenase), E2 (dihydrolipoamide succinyltransferase) and E3 (dihydrolipoamide dehydrogenase); the complex contains multiple copies of the three enzymatic components (E1, E2 and E3). (R)-lipoate is required as a cofactor.

It catalyses the reaction N(6)-[(R)-dihydrolipoyl]-L-lysyl-[protein] + succinyl-CoA = N(6)-[(R)-S(8)-succinyldihydrolipoyl]-L-lysyl-[protein] + CoA. Its pathway is amino-acid degradation; L-lysine degradation via saccharopine pathway; glutaryl-CoA from L-lysine: step 6/6. Its function is as follows. E2 component of the 2-oxoglutarate dehydrogenase (OGDH) complex which catalyzes the second step in the conversion of 2-oxoglutarate to succinyl-CoA and CO(2). This Buchnera aphidicola subsp. Baizongia pistaciae (strain Bp) protein is Dihydrolipoyllysine-residue succinyltransferase component of 2-oxoglutarate dehydrogenase complex (sucB).